Reading from the N-terminus, the 307-residue chain is Agmatinase (307 aa).

Residues H128, D151, H153, D155, D232, and D234 each coordinate Mn(2+).

The protein belongs to the arginase family. Agmatinase subfamily. Mn(2+) is required as a cofactor.

The enzyme catalyses agmatine + H2O = urea + putrescine. It participates in amine and polyamine biosynthesis; putrescine biosynthesis via agmatine pathway; putrescine from agmatine: step 1/1. Its function is as follows. Catalyzes the formation of putrescine from agmatine. The protein is Agmatinase of Neisseria gonorrhoeae (strain ATCC 700825 / FA 1090).